Consider the following 34-residue polypeptide: MNNLEVVFQLMALFFVLAAGPAVVVLVASQKGNL.

A helical transmembrane segment spans residues V6–L26.

This sequence belongs to the Psb30/Ycf12 family. As to quaternary structure, PSII is composed of 1 copy each of membrane proteins PsbA, PsbB, PsbC, PsbD, PsbE, PsbF, PsbH, PsbI, PsbJ, PsbK, PsbL, PsbM, PsbT, PsbX, PsbY, PsbZ, Psb30/Ycf12, peripheral proteins of the oxygen-evolving complex and a large number of cofactors. It forms dimeric complexes.

It is found in the plastid. It localises to the chloroplast thylakoid membrane. A core subunit of photosystem II (PSII), probably helps stabilize the reaction center. This is Photosystem II reaction center protein Psb30 from Stigeoclonium helveticum (Green alga).